The chain runs to 433 residues: Enolase (433 aa).

Position 164 (Gln-164) interacts with (2R)-2-phosphoglycerate. Glu-206 (proton donor) is an active-site residue. Mg(2+) contacts are provided by Asp-243, Glu-289, and Asp-316. Positions 341, 370, 371, and 392 each coordinate (2R)-2-phosphoglycerate. Lys-341 acts as the Proton acceptor in catalysis.

The protein belongs to the enolase family. The cofactor is Mg(2+).

The protein localises to the cytoplasm. It is found in the secreted. Its subcellular location is the cell surface. The enzyme catalyses (2R)-2-phosphoglycerate = phosphoenolpyruvate + H2O. It functions in the pathway carbohydrate degradation; glycolysis; pyruvate from D-glyceraldehyde 3-phosphate: step 4/5. Catalyzes the reversible conversion of 2-phosphoglycerate (2-PG) into phosphoenolpyruvate (PEP). It is essential for the degradation of carbohydrates via glycolysis. The chain is Enolase from Borreliella afzelii (strain PKo) (Borrelia afzelii).